The sequence spans 325 residues: MTFAKITQVAHYVPENVVSNDDLSKIMDTNDEWIYSRTGIKNRHISTGENTSDLAAKVAKQLISDSNLSPETIDFIIVATVTPDSLMPSTAARVQAQVGAVNAFAYDLTAACSGFVFALSTAEKLISSGAYQRGLVIGAEVFSKVIDWSDRSTAVLFGDGAAGVLIEAGASQPLIIAEKMQTDGSRGNSLLSSYADIQTPFASVSYESSNLSMEGRAIFDFAVRDVPKNIQATLEKANLSAEEVDYYLLHQANSRILDKMAKKLGVTRQKFLQNMQEYGNTSAASIPILLSESVKNGIFSLDGQTKVVLTGFGGGLTWGTAIINL.

Catalysis depends on residues C112 and H250. Residues 251–255 (QANSR) form an ACP-binding region. N280 is a catalytic residue.

This sequence belongs to the thiolase-like superfamily. FabH family. In terms of assembly, homodimer.

It localises to the cytoplasm. The enzyme catalyses malonyl-[ACP] + acetyl-CoA + H(+) = 3-oxobutanoyl-[ACP] + CO2 + CoA. The protein operates within lipid metabolism; fatty acid biosynthesis. Catalyzes the condensation reaction of fatty acid synthesis by the addition to an acyl acceptor of two carbons from malonyl-ACP. Catalyzes the first condensation reaction which initiates fatty acid synthesis and may therefore play a role in governing the total rate of fatty acid production. Possesses both acetoacetyl-ACP synthase and acetyl transacylase activities. Its substrate specificity determines the biosynthesis of branched-chain and/or straight-chain of fatty acids. The chain is Beta-ketoacyl-[acyl-carrier-protein] synthase III from Lactococcus lactis subsp. lactis (strain IL1403) (Streptococcus lactis).